Reading from the N-terminus, the 142-residue chain is Hemoglobin subunit alpha (142 aa).

S1 carries the N-acetylserine modification. A Globin domain is found at 1–142; that stretch reads SLSEKNKAAV…VALALADRYR (142 aa). O2 is bound at residue H59. H88 contacts heme b.

This sequence belongs to the globin family. As to quaternary structure, heterotetramer of two alpha chains and two beta chains. In terms of tissue distribution, red blood cells.

Involved in oxygen transport from gills to the various peripheral tissues. This Pagothenia borchgrevinki (Bald rockcod) protein is Hemoglobin subunit alpha (hba).